The sequence spans 151 residues: Ribosome maturation factor RimP (151 aa).

Belongs to the RimP family.

The protein localises to the cytoplasm. In terms of biological role, required for maturation of 30S ribosomal subunits. The chain is Ribosome maturation factor RimP from Desulfotalea psychrophila (strain LSv54 / DSM 12343).